The following is a 209-amino-acid chain: Imidazole glycerol phosphate synthase subunit HisH (209 aa).

Positions 1–205 (MIAIIDYGMG…KGVVETWKSS (205 aa)) constitute a Glutamine amidotransferase type-1 domain. The active-site Nucleophile is the C79. Active-site residues include H180 and E182.

Heterodimer of HisH and HisF.

Its subcellular location is the cytoplasm. The catalysed reaction is 5-[(5-phospho-1-deoxy-D-ribulos-1-ylimino)methylamino]-1-(5-phospho-beta-D-ribosyl)imidazole-4-carboxamide + L-glutamine = D-erythro-1-(imidazol-4-yl)glycerol 3-phosphate + 5-amino-1-(5-phospho-beta-D-ribosyl)imidazole-4-carboxamide + L-glutamate + H(+). It catalyses the reaction L-glutamine + H2O = L-glutamate + NH4(+). It participates in amino-acid biosynthesis; L-histidine biosynthesis; L-histidine from 5-phospho-alpha-D-ribose 1-diphosphate: step 5/9. IGPS catalyzes the conversion of PRFAR and glutamine to IGP, AICAR and glutamate. The HisH subunit catalyzes the hydrolysis of glutamine to glutamate and ammonia as part of the synthesis of IGP and AICAR. The resulting ammonia molecule is channeled to the active site of HisF. This is Imidazole glycerol phosphate synthase subunit HisH from Bacillus cereus (strain AH187).